A 569-amino-acid chain; its full sequence is Urease subunit alpha (569 aa).

The 439-residue stretch at 131 to 569 folds into the Urease domain; it reads GSIDTHIHFI…VPMAQKYFLL (439 aa). The Ni(2+) site is built by histidine 136, histidine 138, and lysine 219. Lysine 219 carries the post-translational modification N6-carboxylysine. A substrate-binding site is contributed by histidine 221. Residues histidine 248 and histidine 274 each contribute to the Ni(2+) site. The active-site Proton donor is the histidine 322. Aspartate 362 serves as a coordination point for Ni(2+).

This sequence belongs to the metallo-dependent hydrolases superfamily. Urease alpha subunit family. Heterotrimer of UreA (gamma), UreB (beta) and UreC (alpha) subunits. Two heterotrimers associate to form the active enzyme. In most bacteria it is thought that three heterotrimers form the active enzyme. Ni cation is required as a cofactor. Post-translationally, carboxylation allows a single lysine to coordinate two nickel ions.

The protein localises to the cytoplasm. It catalyses the reaction urea + 2 H2O + H(+) = hydrogencarbonate + 2 NH4(+). The protein operates within nitrogen metabolism; urea degradation; CO(2) and NH(3) from urea (urease route): step 1/1. Its activity is regulated as follows. Inhibited by HgCl2 and acetohydroxyamic acid slightly by EDTA, but not by boric acid or L-methionine-DL-sulfoximine. The polypeptide is Urease subunit alpha (Prochlorococcus marinus subsp. pastoris (strain PCC 9511)).